Consider the following 274-residue polypeptide: Diaminopimelate epimerase (274 aa).

N11, Q44, and N64 together coordinate substrate. C73 functions as the Proton donor in the catalytic mechanism. Residues 74-75 (GN), N157, N190, and 208-209 (ER) contribute to the substrate site. C217 (proton acceptor) is an active-site residue. Substrate is bound at residue 218-219 (GS).

This sequence belongs to the diaminopimelate epimerase family. As to quaternary structure, homodimer.

Its subcellular location is the cytoplasm. The enzyme catalyses (2S,6S)-2,6-diaminopimelate = meso-2,6-diaminopimelate. The protein operates within amino-acid biosynthesis; L-lysine biosynthesis via DAP pathway; DL-2,6-diaminopimelate from LL-2,6-diaminopimelate: step 1/1. In terms of biological role, catalyzes the stereoinversion of LL-2,6-diaminopimelate (L,L-DAP) to meso-diaminopimelate (meso-DAP), a precursor of L-lysine and an essential component of the bacterial peptidoglycan. The protein is Diaminopimelate epimerase of Pectobacterium carotovorum subsp. carotovorum (strain PC1).